A 385-amino-acid chain; its full sequence is Flavin-dependent monooxygenase (385 aa).

FAD is bound by residues 12-15 (ASIA), 34-36 (EKN), 44-47 (YAID), R105, Y267, D289, and 296-302 (PLSGQGT).

This sequence belongs to the aromatic-ring hydroxylase family. The cofactor is FAD.

It carries out the reaction 7-chlorotetracycline + NADPH + O2 + H(+) = (1S,10S,10aS)-3-(CONH2)-9-Cl-1-(Me2N)-3,3a,4,10-(HO)4-10-Me-2,5-dioxo-1H,10aH,11H,11aH-cyclopenta[b]anthracen-6-olate + CO + NADP(+) + H2O. The enzyme catalyses a tetracycline + NADPH + O2 + H(+) = a (1S,10aS)-3-(CONH2)-1-(Me2N)-3,3a,4,6-(HO)4-2,5-dioxo-1H,10aH,11H,11aH-cyclopenta[b]anthracene + CO + NADP(+) + H2O. With respect to regulation, inhibited by anhydrotetracycline. In terms of biological role, an FAD-requiring monooxygenase active on tetracycline antibiotic and some of its derivatives, which leads to their inactivation. Expression in E.coli confers high resistance to oxytetracycline, slightly less resistance to tetracycline, moderate resistance to minocycline but no resistance to tigecycline. Degrades tetracycline and oxytetracycline; the reaction requires NADPH. Degrades and confers resistance to chlortetracycline. The sequence is that of Flavin-dependent monooxygenase from Unknown prokaryotic organism.